The chain runs to 550 residues: Phospholipase B-like 1 (550 aa).

The N-terminal stretch at 1–39 (MCHRSHGRSLRPPSPLLLLLPLLLQSPWAAGAAEKHNSA) is a signal peptide. An N-linked (GlcNAc...) (high mannose) asparagine; alternate glycan is attached at asparagine 72. Asparagine 72 is a glycosylation site (N-linked (GlcNAc...) (hybrid) asparagine; alternate). The propeptide at 210–228 (LSPTKSSSLKKFKIWEMGH) is removed in mature form. N-linked (GlcNAc...) (high mannose) asparagine; alternate glycans are attached at residues asparagine 309 and asparagine 412. 2 N-linked (GlcNAc...) (hybrid) asparagine; alternate glycosylation sites follow: asparagine 309 and asparagine 412. Intrachain disulfides connect cysteine 471-cysteine 476 and cysteine 475-cysteine 490. Asparagine 527 carries N-linked (GlcNAc...) (high mannose) asparagine; alternate glycosylation. N-linked (GlcNAc...) (hybrid) asparagine; alternate glycosylation is present at asparagine 527.

This sequence belongs to the phospholipase B-like family. May form a homodimer, each monomer is composed of a chain A and a chain B. Post-translationally, the maturation cleavages that produces chains A and B are required to open the putative substrate binding pocket. Both chains A and B remain associated in the mature protein.

The protein resides in the lysosome. In terms of biological role, exhibits weak phospholipase activity, acting on various phospholipids, including phosphatidylcholine, phosphatidylinositol, phosphatidylethanolamine and lysophospholipids. However, in view of the small size of the putative binding pocket, it has been proposed that it may act rather as an amidase or a peptidase. This Rattus norvegicus (Rat) protein is Phospholipase B-like 1 (Plbd1).